The primary structure comprises 427 residues: UDP-N-acetylglucosamine 1-carboxyvinyltransferase (427 aa).

A phosphoenolpyruvate-binding site is contributed by 22 to 23; it reads KN. A UDP-N-acetyl-alpha-D-glucosamine-binding site is contributed by arginine 99. Cysteine 123 serves as the catalytic Proton donor. 2-(S-cysteinyl)pyruvic acid O-phosphothioketal is present on cysteine 123. Residues 128-132, aspartate 313, and isoleucine 335 contribute to the UDP-N-acetyl-alpha-D-glucosamine site; that span reads RPIDL.

Belongs to the EPSP synthase family. MurA subfamily.

The protein resides in the cytoplasm. It carries out the reaction phosphoenolpyruvate + UDP-N-acetyl-alpha-D-glucosamine = UDP-N-acetyl-3-O-(1-carboxyvinyl)-alpha-D-glucosamine + phosphate. It functions in the pathway cell wall biogenesis; peptidoglycan biosynthesis. Cell wall formation. Adds enolpyruvyl to UDP-N-acetylglucosamine. This is UDP-N-acetylglucosamine 1-carboxyvinyltransferase from Sphingopyxis alaskensis (strain DSM 13593 / LMG 18877 / RB2256) (Sphingomonas alaskensis).